The primary structure comprises 619 residues: Chaperone protein HscA homolog (619 aa).

The protein belongs to the heat shock protein 70 family.

Functionally, chaperone involved in the maturation of iron-sulfur cluster-containing proteins. Has a low intrinsic ATPase activity which is markedly stimulated by HscB. In Haemophilus influenzae (strain PittGG), this protein is Chaperone protein HscA homolog.